Reading from the N-terminus, the 234-residue chain is MSQVPSVTAVQVENVLFPPSVKPPGSTNDLFLGGAGVRGLEIQGKFVKFTAIGVYLENSAVPTLAVKWKGKTVEELADSVDFFRDVVTGPFEKFTKVTTILPLTGRQYSDKVSENCVAFWKSVGIYTDAEAKAIEKFNEVLKDETFPPGNSILFTHSPLGALTMSFSKDGSLPEVGNAVIENKLLTEAVLESIIGKHGVSPEAKKSLAARLSELFCKEAGDEKIEAEKVAPVAC.

Substrate is bound by residues T50, N115, and S192.

It belongs to the chalcone isomerase family.

The enzyme catalyses a chalcone = a flavanone.. It participates in secondary metabolite biosynthesis; flavonoid biosynthesis. Functionally, catalyzes the intramolecular cyclization of bicyclic chalcones into tricyclic (S)-flavanones. Responsible for the isomerization of 4,2',4',6'-tetrahydroxychalcone (also termed chalcone) into naringenin. The chain is Chalcone--flavanone isomerase 1 (CHI1) from Vitis vinifera (Grape).